Consider the following 261-residue polypeptide: Enolase-phosphatase E1 (261 aa).

The Mg(2+) site is built by Asp16 and Glu18. Substrate contacts are provided by residues 153 to 154 (SS) and Lys187. Asp212 is a Mg(2+) binding site.

The protein belongs to the HAD-like hydrolase superfamily. MasA/MtnC family. Monomer. Requires Mg(2+) as cofactor.

It is found in the cytoplasm. It localises to the nucleus. It catalyses the reaction 5-methylsulfanyl-2,3-dioxopentyl phosphate + H2O = 1,2-dihydroxy-5-(methylsulfanyl)pent-1-en-3-one + phosphate. It functions in the pathway amino-acid biosynthesis; L-methionine biosynthesis via salvage pathway; L-methionine from S-methyl-5-thio-alpha-D-ribose 1-phosphate: step 3/6. It participates in amino-acid biosynthesis; L-methionine biosynthesis via salvage pathway; L-methionine from S-methyl-5-thio-alpha-D-ribose 1-phosphate: step 4/6. Its function is as follows. Bifunctional enzyme that catalyzes the enolization of 2,3-diketo-5-methylthiopentyl-1-phosphate (DK-MTP-1-P) into the intermediate 2-hydroxy-3-keto-5-methylthiopentenyl-1-phosphate (HK-MTPenyl-1-P), which is then dephosphorylated to form the acireductone 1,2-dihydroxy-3-keto-5-methylthiopentene (DHK-MTPene). This chain is Enolase-phosphatase E1, found in Bos taurus (Bovine).